A 238-amino-acid polypeptide reads, in one-letter code: Probable transcriptional regulatory protein SSP2054 (238 aa).

The protein belongs to the TACO1 family. YeeN subfamily.

It localises to the cytoplasm. In Staphylococcus saprophyticus subsp. saprophyticus (strain ATCC 15305 / DSM 20229 / NCIMB 8711 / NCTC 7292 / S-41), this protein is Probable transcriptional regulatory protein SSP2054.